The primary structure comprises 662 residues: F-box/WD repeat-containing protein pof10 (662 aa).

Residues 1–16 (MKSEPTSLDFTSSNLR) show a composition bias toward polar residues. The interval 1 to 27 (MKSEPTSLDFTSSNLRRMNRDHSSNNT) is disordered. In terms of domain architecture, F-box spans 28–74 (NRTVLNLPKEILIIIFSFLDPRSLLSAQCTCKYWKKLLSDDLSWRTA). WD repeat units lie at residues 215–260 (SHAD…SLQS), 263–302 (FRSS…GYAR), and 429–468 (TAYS…FLKK). Positions 581 to 600 (SEEEIIAYVTMLSQEEEAKR) constitute a UIM 1 domain. The interval 617 to 645 (ENDEQATSSLNALSSNHEPPQEQANVAEL) is disordered. The segment covering 621-640 (QATSSLNALSSNHEPPQEQA) has biased composition (polar residues). A UIM 2 domain is found at 646-662 (NEQEQIELAMRLSLMEM).

In terms of assembly, part of a SCF (SKP1-cullin-F-box) protein ligase complex. Interacts with skp1.

Its subcellular location is the cytoplasm. Probably recognizes and binds to some phosphorylated proteins and promotes their ubiquitination and degradation. This is F-box/WD repeat-containing protein pof10 (pof10) from Schizosaccharomyces pombe (strain 972 / ATCC 24843) (Fission yeast).